We begin with the raw amino-acid sequence, 260 residues long: Putative ABC transporter substrate-binding lipoprotein YvgL (260 aa).

An N-terminal signal peptide occupies residues 1–20 (MFKKYSIFIAALTAFLLVAG). Residue cysteine 21 is the site of N-palmitoyl cysteine attachment. Residue cysteine 21 is the site of S-diacylglycerol cysteine attachment. Residues serine 43, serine 71, alanine 151, valine 178, and tyrosine 196 each contribute to the molybdate site.

The protein belongs to the bacterial solute-binding protein ModA family.

The protein resides in the cell membrane. The chain is Putative ABC transporter substrate-binding lipoprotein YvgL (yvgL) from Bacillus subtilis (strain 168).